The following is an 858-amino-acid chain: DNA mismatch repair protein MutS (858 aa).

Residue 618–625 coordinates ATP; that stretch reads GPNMGGKS.

It belongs to the DNA mismatch repair MutS family.

In terms of biological role, this protein is involved in the repair of mismatches in DNA. It is possible that it carries out the mismatch recognition step. This protein has a weak ATPase activity. This is DNA mismatch repair protein MutS from Shewanella woodyi (strain ATCC 51908 / MS32).